Consider the following 684-residue polypeptide: Protein EXECUTER 1, chloroplastic (684 aa).

Positions 1–31 (MPSLSTPPSQNLAFSPAASATSSRLTPSSKR) are enriched in polar residues. The N-terminal 46 residues, 1 to 46 (MPSLSTPPSQNLAFSPAASATSSRLTPSSKRSFYPHRLPDPTALCR), are a transit peptide targeting the chloroplast. The interval 1-66 (MPSLSTPPSQ…SSSSSDDNPR (66 aa)) is disordered. Over residues 48-61 (SSSSGSNSSSSSSS) the composition is skewed to low complexity. Residues 127–162 (DRLLSVLKSQLNRAIKREDYEDAARLKVAIAATATN) enclose the UVR domain. The tract at residues 278–318 (TLTPGRFLTSPGRKEDTGNLAVESSEDEESDNSDDDSDLLE) is disordered. Residues 301–318 (SSEDEESDNSDDDSDLLE) show a composition bias toward acidic residues.

It localises to the plastid. It is found in the chloroplast. In terms of biological role, together with EX2, enables higher plants to perceive singlet oxygen as a stress signal in plastid that activates a genetically determined nuclear stress response program which triggers a programmed cell death (PCD). This transfer of singlet oxygen-induced stress-related signals from the plastid to the nucleus that triggers genetically controlled PCD pathway is unique to photosynthetic eukaryotes and operates under mild stress conditions, impeding photosystem II (PSII) without causing photooxidative damage of the plant. The protein is Protein EXECUTER 1, chloroplastic of Arabidopsis thaliana (Mouse-ear cress).